A 674-amino-acid chain; its full sequence is tRNA-guanine(15) transglycosylase (674 aa).

The Nucleophile role is filled by Asp-90. Substrate-binding residues include Asp-125 and Ala-192. 3 residues coordinate Zn(2+): Cys-275, Cys-277, and Cys-280. Residues 596–671 enclose the PUA domain; that stretch reads HNRVVVSEDS…QAIKTRKWKK (76 aa).

The protein belongs to the archaeosine tRNA-ribosyltransferase family. Requires Zn(2+) as cofactor.

It catalyses the reaction guanosine(15) in tRNA + 7-cyano-7-deazaguanine = 7-cyano-7-carbaguanosine(15) in tRNA + guanine. It functions in the pathway tRNA modification; archaeosine-tRNA biosynthesis. Exchanges the guanine residue with 7-cyano-7-deazaguanine (preQ0) at position 15 in the dihydrouridine loop (D-loop) of archaeal tRNAs. The protein is tRNA-guanine(15) transglycosylase of Methanosphaera stadtmanae (strain ATCC 43021 / DSM 3091 / JCM 11832 / MCB-3).